Here is a 176-residue protein sequence, read N- to C-terminus: Pectinesterase inhibitor 1 (176 aa).

A signal peptide spans 1-25 (MAANLRNNAFLSSLMFLLLIGSSYA). 2 disulfides stabilise this stretch: Cys-35–Cys-44 and Cys-98–Cys-138. An N-linked (GlcNAc...) asparagine glycan is attached at Asn-154.

The protein belongs to the PMEI family. In terms of assembly, monomer and homodimer. Interacts in vitro with PPME1. Highest expression in flowers. Expressed exclusively at the pollen tube tip.

The protein localises to the secreted. It localises to the extracellular space. It is found in the apoplast. Functionally, inhibits pectin methylesterase (PME) from flowers and siliques. Inhibits PME from leaves. The sequence is that of Pectinesterase inhibitor 1 from Arabidopsis thaliana (Mouse-ear cress).